Here is a 767-residue protein sequence, read N- to C-terminus: 5-methyltetrahydropteroyltriglutamate--homocysteine methyltransferase (767 aa).

Residues R17–K20 and K117 contribute to the 5-methyltetrahydropteroyltri-L-glutamate site. Residues I441–S443 and E494 contribute to the L-homocysteine site. L-methionine is bound by residues I441 to S443 and E494. Residues R525 to C526 and W571 contribute to the 5-methyltetrahydropteroyltri-L-glutamate site. D609 lines the L-homocysteine pocket. D609 lines the L-methionine pocket. E615 contributes to the 5-methyltetrahydropteroyltri-L-glutamate binding site. Zn(2+) is bound by residues H652, C654, and E676. The active-site Proton donor is H705. C737 serves as a coordination point for Zn(2+).

The protein belongs to the vitamin-B12 independent methionine synthase family. Zn(2+) is required as a cofactor.

It catalyses the reaction 5-methyltetrahydropteroyltri-L-glutamate + L-homocysteine = tetrahydropteroyltri-L-glutamate + L-methionine. The protein operates within amino-acid biosynthesis; L-methionine biosynthesis via de novo pathway; L-methionine from L-homocysteine (MetE route): step 1/1. Functionally, catalyzes the transfer of a methyl group from 5-methyltetrahydrofolate to homocysteine resulting in methionine formation. This Bifidobacterium longum (strain NCC 2705) protein is 5-methyltetrahydropteroyltriglutamate--homocysteine methyltransferase.